Reading from the N-terminus, the 899-residue chain is Ewing's tumor-associated antigen 1 homolog (899 aa).

Positions 1–82 are disordered; it reads MSRRRKHGDS…TEERYETPKR (82 aa). The span at 71–81 shows a compositional bias: basic and acidic residues; that stretch reads SNTEERYETPK. The ATR-activation domain (AAD) motif lies at 105-111; that stretch reads IFWDQNS. A coiled-coil region spans residues 180-210; that stretch reads TKLKSQNQEEELMKLAKQFDKNMEELDVIQE. Residues Lys416 and Lys444 each participate in a glycyl lysine isopeptide (Lys-Gly) (interchain with G-Cter in SUMO2) cross-link. Position 467 is a phosphoserine (Ser467). Glycyl lysine isopeptide (Lys-Gly) (interchain with G-Cter in SUMO2) cross-links involve residues Lys485 and Lys539. The RBM1 motif motif lies at 607–622; it reads DDVDDDILYQACDDIE. Ser810 bears the Phosphoserine mark. Residues 833–899 are disordered; it reads NKTVNPLPGK…AQASSVKKGR (67 aa). Residues 859–877 are compositionally biased toward basic and acidic residues; sequence PSKEEEEKNRKCSPEEIQR. Positions 868–890 match the RBM2 motif motif; that stretch reads RKCSPEEIQRKRQAALIRRMAKA.

As to quaternary structure, interacts (via RBM1 motif) with RPA1. Interacts (via RBM2 motif) with RPA2. Interacts (via the ATR-activation domain motif) with ATR. Post-translationally, phosphorylated by ATR.

The protein localises to the nucleus. Functionally, replication stress response protein that accumulates at DNA damage sites and promotes replication fork progression and integrity. Recruited to stalled replication forks via interaction with the RPA complex and directly stimulates ATR kinase activity independently of TOPBP1. Probably only regulates a subset of ATR targets. This chain is Ewing's tumor-associated antigen 1 homolog, found in Bos taurus (Bovine).